The primary structure comprises 290 residues: MKFVIITGLSGAGKSQAIKYMEDFGYYCVDNLPPTLLTKFAELCYQSQGPMAKVALVIDIRGGMFFEDLFSSLERMTEAGYQYEILFLDASDKALIKRFKETRRSHPLSVDGSIPEGIALEREKLKELKQKAKHIIDTTNLRSAQLKEELNNIYVEGNQSNNLIISIVSFGFKHGIPLDADLVFDVRFLPNPFYIEDLKELTGNDKKVRDYVMNAPISVEFSNKLNDMISFLIPQYIEEGKNQLVIAIGCTGGMHRSVTIAHVLYNYLKERGYRVLMNHRDSNLSIGRKG.

Residue Gly-8 to Ser-15 participates in ATP binding. Asp-59 to Gly-62 is a GTP binding site.

The protein belongs to the RapZ-like family.

Its function is as follows. Displays ATPase and GTPase activities. The chain is Nucleotide-binding protein Clos_0574 from Alkaliphilus oremlandii (strain OhILAs) (Clostridium oremlandii (strain OhILAs)).